The chain runs to 258 residues: Hydroxyacylglutathione hydrolase (258 aa).

Residues H54, H56, D58, H59, H113, D138, and H176 each contribute to the Zn(2+) site.

It belongs to the metallo-beta-lactamase superfamily. Glyoxalase II family. As to quaternary structure, monomer. Requires Zn(2+) as cofactor.

The enzyme catalyses an S-(2-hydroxyacyl)glutathione + H2O = a 2-hydroxy carboxylate + glutathione + H(+). The protein operates within secondary metabolite metabolism; methylglyoxal degradation; (R)-lactate from methylglyoxal: step 2/2. In terms of biological role, thiolesterase that catalyzes the hydrolysis of S-D-lactoyl-glutathione to form glutathione and D-lactic acid. In Synechococcus sp. (strain ATCC 27144 / PCC 6301 / SAUG 1402/1) (Anacystis nidulans), this protein is Hydroxyacylglutathione hydrolase.